The primary structure comprises 626 residues: 1-deoxy-D-xylulose-5-phosphate synthase 2 (626 aa).

Residues His74 and 115–117 contribute to the thiamine diphosphate site; that span reads GHA. A Mg(2+)-binding site is contributed by Asp146. Thiamine diphosphate contacts are provided by residues 147–148, Asn175, Phe286, and Glu368; that span reads GS. Asn175 provides a ligand contact to Mg(2+).

Belongs to the transketolase family. DXPS subfamily. As to quaternary structure, homodimer. Mg(2+) is required as a cofactor. Requires thiamine diphosphate as cofactor.

The enzyme catalyses D-glyceraldehyde 3-phosphate + pyruvate + H(+) = 1-deoxy-D-xylulose 5-phosphate + CO2. The protein operates within metabolic intermediate biosynthesis; 1-deoxy-D-xylulose 5-phosphate biosynthesis; 1-deoxy-D-xylulose 5-phosphate from D-glyceraldehyde 3-phosphate and pyruvate: step 1/1. Catalyzes the acyloin condensation reaction between C atoms 2 and 3 of pyruvate and glyceraldehyde 3-phosphate to yield 1-deoxy-D-xylulose-5-phosphate (DXP). The chain is 1-deoxy-D-xylulose-5-phosphate synthase 2 from Geobacter sulfurreducens (strain ATCC 51573 / DSM 12127 / PCA).